The sequence spans 202 residues: Small ribosomal subunit protein uS4 (202 aa).

A disordered region spans residues 22 to 48; it reads TGKELARRPYAPGDHGQGRRGKLSEYG. Residues 93 to 154 enclose the S4 RNA-binding domain; it reads RRLDNMVYRL…KSKKLAVITG (62 aa).

This sequence belongs to the universal ribosomal protein uS4 family. Part of the 30S ribosomal subunit. Contacts protein S5. The interaction surface between S4 and S5 is involved in control of translational fidelity.

Its function is as follows. One of the primary rRNA binding proteins, it binds directly to 16S rRNA where it nucleates assembly of the body of the 30S subunit. With S5 and S12 plays an important role in translational accuracy. In Lactiplantibacillus plantarum (strain ATCC BAA-793 / NCIMB 8826 / WCFS1) (Lactobacillus plantarum), this protein is Small ribosomal subunit protein uS4.